The primary structure comprises 343 residues: Anthranilate phosphoribosyltransferase (343 aa).

5-phospho-alpha-D-ribose 1-diphosphate contacts are provided by residues G81, 84 to 85, 91 to 94, 109 to 117, and S121; these read GD, NLST, and KHGNRSVSS. G81 serves as a coordination point for anthranilate. Residue S93 participates in Mg(2+) binding. An anthranilate-binding site is contributed by N112. R167 contacts anthranilate. The Mg(2+) site is built by D226 and E227.

This sequence belongs to the anthranilate phosphoribosyltransferase family. In terms of assembly, homodimer. It depends on Mg(2+) as a cofactor.

The enzyme catalyses N-(5-phospho-beta-D-ribosyl)anthranilate + diphosphate = 5-phospho-alpha-D-ribose 1-diphosphate + anthranilate. It functions in the pathway amino-acid biosynthesis; L-tryptophan biosynthesis; L-tryptophan from chorismate: step 2/5. In terms of biological role, catalyzes the transfer of the phosphoribosyl group of 5-phosphorylribose-1-pyrophosphate (PRPP) to anthranilate to yield N-(5'-phosphoribosyl)-anthranilate (PRA). The polypeptide is Anthranilate phosphoribosyltransferase (Cellvibrio japonicus (strain Ueda107) (Pseudomonas fluorescens subsp. cellulosa)).